A 253-amino-acid polypeptide reads, in one-letter code: Imidazole glycerol phosphate synthase subunit HisF (253 aa).

Active-site residues include Asp-11 and Asp-130.

Belongs to the HisA/HisF family. As to quaternary structure, heterodimer of HisH and HisF.

The protein localises to the cytoplasm. The catalysed reaction is 5-[(5-phospho-1-deoxy-D-ribulos-1-ylimino)methylamino]-1-(5-phospho-beta-D-ribosyl)imidazole-4-carboxamide + L-glutamine = D-erythro-1-(imidazol-4-yl)glycerol 3-phosphate + 5-amino-1-(5-phospho-beta-D-ribosyl)imidazole-4-carboxamide + L-glutamate + H(+). It functions in the pathway amino-acid biosynthesis; L-histidine biosynthesis; L-histidine from 5-phospho-alpha-D-ribose 1-diphosphate: step 5/9. IGPS catalyzes the conversion of PRFAR and glutamine to IGP, AICAR and glutamate. The HisF subunit catalyzes the cyclization activity that produces IGP and AICAR from PRFAR using the ammonia provided by the HisH subunit. This chain is Imidazole glycerol phosphate synthase subunit HisF, found in Thermoanaerobacter sp. (strain X514).